The primary structure comprises 416 residues: Tyrosine--tRNA ligase (416 aa).

An L-tyrosine-binding site is contributed by tyrosine 34. A 'HIGH' region motif is present at residues 39 to 48; that stretch reads PTGDSLHIGH. Tyrosine 165 and glutamine 169 together coordinate L-tyrosine. The short motif at 227-231 is the 'KMSKS' region element; that stretch reads KFGKT. Lysine 230 contributes to the ATP binding site. The S4 RNA-binding domain occupies 349–416; that stretch reads KNIVEWLVDT…KKKYFLARVK (68 aa).

Belongs to the class-I aminoacyl-tRNA synthetase family. TyrS type 1 subfamily. As to quaternary structure, homodimer.

Its subcellular location is the cytoplasm. The enzyme catalyses tRNA(Tyr) + L-tyrosine + ATP = L-tyrosyl-tRNA(Tyr) + AMP + diphosphate + H(+). Its function is as follows. Catalyzes the attachment of tyrosine to tRNA(Tyr) in a two-step reaction: tyrosine is first activated by ATP to form Tyr-AMP and then transferred to the acceptor end of tRNA(Tyr). This is Tyrosine--tRNA ligase from Ligilactobacillus salivarius (strain UCC118) (Lactobacillus salivarius).